The chain runs to 88 residues: Apolipoprotein C-I (88 aa).

Positions 1–26 (MRLFLSLPVLVVVLAMVLEGPAPTQA) are cleaved as a signal peptide.

Belongs to the apolipoprotein C1 family.

Its subcellular location is the secreted. In terms of biological role, inhibitor of lipoprotein binding to the low density lipoprotein (LDL) receptor, LDL receptor-related protein, and very low density lipoprotein (VLDL) receptor. Associates with high density lipoproteins (HDL) and the triacylglycerol-rich lipoproteins in the plasma and makes up about 10% of the protein of the VLDL and 2% of that of HDL. Appears to interfere directly with fatty acid uptake and is also the major plasma inhibitor of cholesteryl ester transfer protein (CETP). Binds free fatty acids and reduces their intracellular esterification. Modulates the interaction of APOE with beta-migrating VLDL and inhibits binding of beta-VLDL to the LDL receptor-related protein. The polypeptide is Apolipoprotein C-I (APOC1) (Phoca vitulina (Harbor seal)).